The sequence spans 411 residues: Serine--tRNA ligase (411 aa).

226-228 (TSE) lines the L-serine pocket. Position 257–259 (257–259 (RKE)) interacts with ATP. Glu280 serves as a coordination point for L-serine. ATP is bound at residue 344 to 347 (EISS). Position 379 (Ser379) interacts with L-serine.

This sequence belongs to the class-II aminoacyl-tRNA synthetase family. Type-1 seryl-tRNA synthetase subfamily. Homodimer. The tRNA molecule binds across the dimer.

The protein resides in the cytoplasm. It carries out the reaction tRNA(Ser) + L-serine + ATP = L-seryl-tRNA(Ser) + AMP + diphosphate + H(+). It catalyses the reaction tRNA(Sec) + L-serine + ATP = L-seryl-tRNA(Sec) + AMP + diphosphate + H(+). It participates in aminoacyl-tRNA biosynthesis; selenocysteinyl-tRNA(Sec) biosynthesis; L-seryl-tRNA(Sec) from L-serine and tRNA(Sec): step 1/1. Functionally, catalyzes the attachment of serine to tRNA(Ser). Is also able to aminoacylate tRNA(Sec) with serine, to form the misacylated tRNA L-seryl-tRNA(Sec), which will be further converted into selenocysteinyl-tRNA(Sec). The chain is Serine--tRNA ligase from Campylobacter jejuni subsp. jejuni serotype O:2 (strain ATCC 700819 / NCTC 11168).